A 216-amino-acid polypeptide reads, in one-letter code: Cobalt-zinc-cadmium resistance protein CzcN (216 aa).

A run of 3 helical transmembrane segments spans residues 27 to 47 (IGVW…GHSR), 50 to 70 (GTWV…LATV), and 116 to 136 (ESLA…PAVI).

To A.xylosoxydans NccN.

It is found in the cell inner membrane. Functionally, component of the CZC cation-efflux system that confers resistance to cobalt, zinc and cadmium. The protein is Cobalt-zinc-cadmium resistance protein CzcN (czcN) of Cupriavidus metallidurans (strain ATCC 43123 / DSM 2839 / NBRC 102507 / CH34) (Ralstonia metallidurans).